Consider the following 420-residue polypeptide: Protein disulfide isomerase CRELD1 (420 aa).

Positions 1 to 29 (MAPRSSRGIAPAMLCGLSLFLGFPGLVWV) are cleaved as a signal peptide. Topologically, residues 30–362 (QISVPPQSSP…GFFSEMTEDE (333 aa)) are extracellular. Residues 46–49 (CHTC) carry the CXXC motif. Intrachain disulfides connect cysteine 46-cysteine 49, cysteine 155-cysteine 169, cysteine 163-cysteine 181, and cysteine 183-cysteine 192. Residues 153–193 (LPCPGGAERPCGGYGHCEGEGTRGGSGHCDCQAGYGGEACG) form the EGF-like 1 domain. Residue asparagine 205 is glycosylated (N-linked (GlcNAc...) asparagine). 2 FU repeats span residues 208–255 (HLVC…ERAS) and 268–315 (SYEC…AVCP). Residues 278-281 (CLGC) carry the CXXC motif. Disulfide bonds link cysteine 278/cysteine 281, cysteine 309/cysteine 321, cysteine 314/cysteine 330, and cysteine 332/cysteine 343. An EGF-like 2; calcium-binding domain is found at 305-344 (DVDECETAVCPGENQQCENTEGSYRCICADGYKQMEGICV). The helical transmembrane segment at 363–383 (LVVLQQMFFGVIICALATLAA) threads the bilayer. A topological domain (cytoplasmic) is located at residue lysine 384. Residues 385–405 (GDLVFTAIFIGAVAAMTGYWL) form a helical membrane-spanning segment. The Extracellular portion of the chain corresponds to 406–420 (SERSDRVLEGFIKGR).

This sequence belongs to the CRELD family.

It localises to the membrane. The enzyme catalyses Catalyzes the rearrangement of -S-S- bonds in proteins.. Protein disulfide isomerase. Promotes the localization of acetylcholine receptors (AChRs) to the plasma membrane. In Bos taurus (Bovine), this protein is Protein disulfide isomerase CRELD1 (CRELD1).